Consider the following 107-residue polypeptide: Guanine nucleotide-binding protein G(I)/G(S)/G(O) subunit gamma-14 (107 aa).

In terms of domain architecture, G protein gamma spans 69 to 107 (KMAADLLKFCTEQAKNDPFLVGIPAATNSFKEKKPYAIL).

The protein belongs to the G protein gamma family. In terms of assembly, g proteins are composed of 3 units; alpha, beta and gamma.

Its subcellular location is the cell membrane. Its function is as follows. Guanine nucleotide-binding proteins (G proteins) are involved as a modulator or transducer in various transmembrane signaling systems. The beta and gamma chains are required for the GTPase activity, for replacement of GDP by GTP, and for G protein-effector interaction. This is Guanine nucleotide-binding protein G(I)/G(S)/G(O) subunit gamma-14 from Homo sapiens (Human).